A 329-amino-acid chain; its full sequence is Beta-ketoacyl-[acyl-carrier-protein] synthase III (329 aa).

Active-site residues include Cys113 and His255. The segment at 256–260 (QANQR) is ACP-binding. Residue Asn285 is part of the active site.

Belongs to the thiolase-like superfamily. FabH family. Homodimer.

The protein resides in the cytoplasm. The catalysed reaction is malonyl-[ACP] + acetyl-CoA + H(+) = 3-oxobutanoyl-[ACP] + CO2 + CoA. It functions in the pathway lipid metabolism; fatty acid biosynthesis. Functionally, catalyzes the condensation reaction of fatty acid synthesis by the addition to an acyl acceptor of two carbons from malonyl-ACP. Catalyzes the first condensation reaction which initiates fatty acid synthesis and may therefore play a role in governing the total rate of fatty acid production. Possesses both acetoacetyl-ACP synthase and acetyl transacylase activities. Its substrate specificity determines the biosynthesis of branched-chain and/or straight-chain of fatty acids. The polypeptide is Beta-ketoacyl-[acyl-carrier-protein] synthase III (Chlorobium luteolum (strain DSM 273 / BCRC 81028 / 2530) (Pelodictyon luteolum)).